A 207-amino-acid polypeptide reads, in one-letter code: Probable GTP-binding protein EngB (207 aa).

An EngB-type G domain is found at 22–193 (RVPEIVFAGR…LAHFDHYLSG (172 aa)). GTP is bound by residues 30-37 (GRSNVGKS), 57-61 (GKTRL), 75-78 (DIPG), 142-145 (TKDD), and 172-174 (YSS). Ser-37 and Thr-59 together coordinate Mg(2+).

This sequence belongs to the TRAFAC class TrmE-Era-EngA-EngB-Septin-like GTPase superfamily. EngB GTPase family. Mg(2+) is required as a cofactor.

Necessary for normal cell division and for the maintenance of normal septation. In Chlorobium luteolum (strain DSM 273 / BCRC 81028 / 2530) (Pelodictyon luteolum), this protein is Probable GTP-binding protein EngB.